The primary structure comprises 105 residues: MSAILKHSEERLMKVLLAPVISEKATFVAEKNEQVVFLVMPDATKPEIKAAVELLFKVQVESVQVANRQGKQKRSGRFNGRRNHTRRAFVCLKPGQEINFTEEAK.

Belongs to the universal ribosomal protein uL23 family. As to quaternary structure, part of the 50S ribosomal subunit. Contacts protein L29, and trigger factor when it is bound to the ribosome.

Functionally, one of the early assembly proteins it binds 23S rRNA. One of the proteins that surrounds the polypeptide exit tunnel on the outside of the ribosome. Forms the main docking site for trigger factor binding to the ribosome. The protein is Large ribosomal subunit protein uL23 of Janthinobacterium sp. (strain Marseille) (Minibacterium massiliensis).